The sequence spans 242 residues: Segregation and condensation protein A (242 aa).

This sequence belongs to the ScpA family. In terms of assembly, component of a cohesin-like complex composed of ScpA, ScpB and the Smc homodimer, in which ScpA and ScpB bind to the head domain of Smc. The presence of the three proteins is required for the association of the complex with DNA.

It is found in the cytoplasm. In terms of biological role, participates in chromosomal partition during cell division. May act via the formation of a condensin-like complex containing Smc and ScpB that pull DNA away from mid-cell into both cell halves. The chain is Segregation and condensation protein A from Streptococcus mitis.